The sequence spans 305 residues: tRNA dimethylallyltransferase (305 aa).

Residue 9–16 participates in ATP binding; sequence GPTGAGKT. 11-16 contributes to the substrate binding site; it reads TGAGKT. Interaction with substrate tRNA stretches follow at residues 34-37 and 158-162; these read DSRQ and QRIVR.

Belongs to the IPP transferase family. As to quaternary structure, monomer. Requires Mg(2+) as cofactor.

It carries out the reaction adenosine(37) in tRNA + dimethylallyl diphosphate = N(6)-dimethylallyladenosine(37) in tRNA + diphosphate. Functionally, catalyzes the transfer of a dimethylallyl group onto the adenine at position 37 in tRNAs that read codons beginning with uridine, leading to the formation of N6-(dimethylallyl)adenosine (i(6)A). This chain is tRNA dimethylallyltransferase, found in Oleidesulfovibrio alaskensis (strain ATCC BAA-1058 / DSM 17464 / G20) (Desulfovibrio alaskensis).